The sequence spans 424 residues: S-adenosylmethionine synthase (424 aa).

Histidine 16 contacts ATP. Mg(2+) is bound at residue aspartate 18. Glutamate 44 contributes to the K(+) binding site. L-methionine is bound by residues glutamate 57 and glutamine 100. A flexible loop region spans residues 100 to 110; sequence QSPDIAQGVNT. ATP-binding positions include 175–177, 251–252, aspartate 260, 266–267, alanine 283, and lysine 287; these read DGK, KF, and RK. Aspartate 260 is an L-methionine binding site. An L-methionine-binding site is contributed by lysine 291.

The protein belongs to the AdoMet synthase family. Homotetramer; dimer of dimers. Mg(2+) serves as cofactor. The cofactor is K(+).

It is found in the cytoplasm. It catalyses the reaction L-methionine + ATP + H2O = S-adenosyl-L-methionine + phosphate + diphosphate. It participates in amino-acid biosynthesis; S-adenosyl-L-methionine biosynthesis; S-adenosyl-L-methionine from L-methionine: step 1/1. Catalyzes the formation of S-adenosylmethionine (AdoMet) from methionine and ATP. The overall synthetic reaction is composed of two sequential steps, AdoMet formation and the subsequent tripolyphosphate hydrolysis which occurs prior to release of AdoMet from the enzyme. The polypeptide is S-adenosylmethionine synthase (Nostoc punctiforme (strain ATCC 29133 / PCC 73102)).